The following is an 89-amino-acid chain: UPF0237 protein CPE1496 (89 aa).

Positions 4 to 84 (VITVVGKDKV…ISVQHEDIFN (81 aa)) constitute an ACT domain.

It belongs to the UPF0237 family.

The polypeptide is UPF0237 protein CPE1496 (Clostridium perfringens (strain 13 / Type A)).